We begin with the raw amino-acid sequence, 604 residues long: Inactive all-trans-retinol 13,14-reductase (604 aa).

The N-terminal stretch at 1–17 is a signal peptide; that stretch reads MWWILLFLEWFVDWARG.

It belongs to the carotenoid/retinoid oxidoreductase family. CrtISO subfamily.

The polypeptide is Inactive all-trans-retinol 13,14-reductase (retsatl) (Danio rerio (Zebrafish)).